We begin with the raw amino-acid sequence, 508 residues long: Bifunctional purine biosynthesis protein PurH (508 aa).

The region spanning 1–144 (MTRALLSVSD…KNFAGVLPIV (144 aa)) is the MGS-like domain.

The protein belongs to the PurH family.

It carries out the reaction (6R)-10-formyltetrahydrofolate + 5-amino-1-(5-phospho-beta-D-ribosyl)imidazole-4-carboxamide = 5-formamido-1-(5-phospho-D-ribosyl)imidazole-4-carboxamide + (6S)-5,6,7,8-tetrahydrofolate. It catalyses the reaction IMP + H2O = 5-formamido-1-(5-phospho-D-ribosyl)imidazole-4-carboxamide. The protein operates within purine metabolism; IMP biosynthesis via de novo pathway; 5-formamido-1-(5-phospho-D-ribosyl)imidazole-4-carboxamide from 5-amino-1-(5-phospho-D-ribosyl)imidazole-4-carboxamide (10-formyl THF route): step 1/1. Its pathway is purine metabolism; IMP biosynthesis via de novo pathway; IMP from 5-formamido-1-(5-phospho-D-ribosyl)imidazole-4-carboxamide: step 1/1. This Leuconostoc citreum (strain KM20) protein is Bifunctional purine biosynthesis protein PurH.